Reading from the N-terminus, the 480-residue chain is Cysteine--tRNA ligase (480 aa).

A Zn(2+)-binding site is contributed by C29. The short motif at 31 to 41 is the 'HIGH' region element; the sequence is PTVYSDPHLGH. The Zn(2+) site is built by C220, H245, and E249. The 'KMSKS' region motif lies at 276-280; sequence KMAKS. K279 lines the ATP pocket.

This sequence belongs to the class-I aminoacyl-tRNA synthetase family. In terms of assembly, monomer. It depends on Zn(2+) as a cofactor.

It localises to the cytoplasm. The enzyme catalyses tRNA(Cys) + L-cysteine + ATP = L-cysteinyl-tRNA(Cys) + AMP + diphosphate. The sequence is that of Cysteine--tRNA ligase from Thermus thermophilus (strain ATCC BAA-163 / DSM 7039 / HB27).